The chain runs to 219 residues: Probable GTP-binding protein EngB (219 aa).

The EngB-type G domain occupies 31-205 (VGVEIAFAGR…LAILNEWCHP (175 aa)). GTP-binding positions include 39–46 (GRSNAGKS), 66–70 (GRTQL), 84–87 (DLPG), 151–154 (TKSD), and 184–186 (FSS). Residues S46 and T68 each contribute to the Mg(2+) site.

This sequence belongs to the TRAFAC class TrmE-Era-EngA-EngB-Septin-like GTPase superfamily. EngB GTPase family. Mg(2+) is required as a cofactor.

Functionally, necessary for normal cell division and for the maintenance of normal septation. The chain is Probable GTP-binding protein EngB from Shewanella baltica (strain OS223).